The sequence spans 244 residues: Cobalt transport protein CbiM (244 aa).

The signal sequence occupies residues 1 to 28; the sequence is MKLLKNKKVTFVALLAILAVLSTQSVSA. The next 6 helical transmembrane spans lie at 36–56, 71–91, 108–128, 135–155, 166–186, and 208–228; these read LPLFWCIFWFAVFLPFFVVGL, TMLALSGAFIFILSSLKIPSV, FGPSVISVLGTICLLFQALLL, TLGANAFSMAVVGPFVGYFVY, PVSIFICAVIADLATYATTSI, and GVFLTTQIPIAIVEGLLTVVL.

Belongs to the CbiM family. As to quaternary structure, forms an energy-coupling factor (ECF) transporter complex composed of an ATP-binding protein (A component, CbiO), a transmembrane protein (T component, CbiQ) and 2 possible substrate-capture proteins (S components, CbiM and CbiN) of unknown stoichimetry.

The protein resides in the cell membrane. It functions in the pathway cofactor biosynthesis; adenosylcobalamin biosynthesis. Functionally, part of the energy-coupling factor (ECF) transporter complex CbiMNOQ involved in cobalt import. The protein is Cobalt transport protein CbiM of Streptococcus sanguinis (strain SK36).